The chain runs to 1293 residues: Phosphoribosylformylglycinamidine synthase (1293 aa).

ATP-binding positions include 305–316 and Ala-676; that span reads GAATGSGGEIRD. Positions 677, 716, 720, and 884 each coordinate Mg(2+). ATP is bound at residue Ser-886. The region spanning 1040–1293 is the Glutamine amidotransferase type-1 domain; that stretch reads MAILREQGVN…MFRNARVKLG (254 aa). Catalysis depends on Cys-1133, which acts as the Nucleophile. Residues His-1258 and Glu-1260 contribute to the active site.

The protein in the N-terminal section; belongs to the FGAMS family. Monomer.

The protein localises to the cytoplasm. It carries out the reaction N(2)-formyl-N(1)-(5-phospho-beta-D-ribosyl)glycinamide + L-glutamine + ATP + H2O = 2-formamido-N(1)-(5-O-phospho-beta-D-ribosyl)acetamidine + L-glutamate + ADP + phosphate + H(+). It participates in purine metabolism; IMP biosynthesis via de novo pathway; 5-amino-1-(5-phospho-D-ribosyl)imidazole from N(2)-formyl-N(1)-(5-phospho-D-ribosyl)glycinamide: step 1/2. Its function is as follows. Phosphoribosylformylglycinamidine synthase involved in the purines biosynthetic pathway. Catalyzes the ATP-dependent conversion of formylglycinamide ribonucleotide (FGAR) and glutamine to yield formylglycinamidine ribonucleotide (FGAM) and glutamate. In Shewanella denitrificans (strain OS217 / ATCC BAA-1090 / DSM 15013), this protein is Phosphoribosylformylglycinamidine synthase.